Here is a 285-residue protein sequence, read N- to C-terminus: Phosphoribosylaminoimidazole-succinocarboxamide synthase (285 aa).

It belongs to the SAICAR synthetase family.

The catalysed reaction is 5-amino-1-(5-phospho-D-ribosyl)imidazole-4-carboxylate + L-aspartate + ATP = (2S)-2-[5-amino-1-(5-phospho-beta-D-ribosyl)imidazole-4-carboxamido]succinate + ADP + phosphate + 2 H(+). The protein operates within purine metabolism; IMP biosynthesis via de novo pathway; 5-amino-1-(5-phospho-D-ribosyl)imidazole-4-carboxamide from 5-amino-1-(5-phospho-D-ribosyl)imidazole-4-carboxylate: step 1/2. The protein is Phosphoribosylaminoimidazole-succinocarboxamide synthase of Leptospira interrogans serogroup Icterohaemorrhagiae serovar copenhageni (strain Fiocruz L1-130).